A 179-amino-acid polypeptide reads, in one-letter code: Probable DNA-directed RNA polymerase subunit delta (179 aa).

An HTH HARE-type domain is found at 14 to 81 (MSLVELAYEI…GDQRWGLRSW (68 aa)). The disordered stretch occupies residues 108–179 (VVEEDFDEIE…DDLDDNEEEK (72 aa)). A compositionally biased stretch (acidic residues) spans 109 to 179 (VEEDFDEIEE…DDLDDNEEEK (71 aa)).

It belongs to the RpoE family. RNAP is composed of a core of 2 alpha, a beta and a beta' subunits. The core is associated with a delta subunit and one of several sigma factors.

In terms of biological role, participates in both the initiation and recycling phases of transcription. In the presence of the delta subunit, RNAP displays an increased specificity of transcription, a decreased affinity for nucleic acids, and an increased efficiency of RNA synthesis because of enhanced recycling. This chain is Probable DNA-directed RNA polymerase subunit delta, found in Bacillus pumilus (strain SAFR-032).